The sequence spans 67 residues: DNA-directed RNA polymerase subunit omega (67 aa).

Belongs to the RNA polymerase subunit omega family. The RNAP catalytic core consists of 2 alpha, 1 beta, 1 beta' and 1 omega subunit. When a sigma factor is associated with the core the holoenzyme is formed, which can initiate transcription.

The enzyme catalyses RNA(n) + a ribonucleoside 5'-triphosphate = RNA(n+1) + diphosphate. Its function is as follows. Promotes RNA polymerase assembly. Latches the N- and C-terminal regions of the beta' subunit thereby facilitating its interaction with the beta and alpha subunits. This is DNA-directed RNA polymerase subunit omega from Paraburkholderia phymatum (strain DSM 17167 / CIP 108236 / LMG 21445 / STM815) (Burkholderia phymatum).